The following is a 92-amino-acid chain: MSDENKSTPIVKASDITDKLKEDILTISKDALDKYQLERDIAGTVKKQLDVKYGNTWHVIVGKNFGSYVTHEKGHFVYFYIGPLAFLVFKTA.

The protein belongs to the dynein light chain family. In terms of assembly, homodimer. Cytoplasmic dynein consists of two catalytic heavy chains (HCs) and a number of non-catalytic subunits which present intermediate chains (ICs), light intermediate chains (LICs) and light chains (LCs). Component of the nuclear pore complex (NPC). NPC constitutes the exclusive means of nucleocytoplasmic transport. NPCs allow the passive diffusion of ions and small molecules and the active, nuclear transport receptor-mediated bidirectional transport of macromolecules such as proteins, RNAs, ribonucleoparticles (RNPs), and ribosomal subunits across the nuclear envelope. Due to its 8-fold rotational symmetry, all subunits are present with 8 copies or multiples thereof. Part of the NUP82 subcomplex. In the complex, interacts directly with Nup159.

It localises to the cytoplasm. The protein localises to the cytoskeleton. Its subcellular location is the nucleus. It is found in the nuclear pore complex. Its function is as follows. Acts as one of several non-catalytic accessory components of the cytoplasmic dynein complex that are thought to be involved in linking dynein to cargos and to adapter proteins that regulate dynein function. Cytoplasmic dynein 1 acts as a motor for the intracellular retrograde motility of vesicles and organelles along microtubules. May play a role in changing or maintaining the spatial distribution of cytoskeletal structures. Also a component of the nuclear pore complex where it may contribute to the stable association of the Nup82 subcomplex with the NPC. This Saccharomyces cerevisiae (strain ATCC 204508 / S288c) (Baker's yeast) protein is Dynein light chain 1, cytoplasmic (DYN2).